The following is a 546-amino-acid chain: Chaperonin GroEL (546 aa).

ATP-binding positions include 29–32 (TMGP), K50, 86–90 (DGTTT), G412, 476–478 (NAA), and D492.

Belongs to the chaperonin (HSP60) family. In terms of assembly, forms a cylinder of 14 subunits composed of two heptameric rings stacked back-to-back. Interacts with the co-chaperonin GroES.

The protein localises to the cytoplasm. It carries out the reaction ATP + H2O + a folded polypeptide = ADP + phosphate + an unfolded polypeptide.. In terms of biological role, together with its co-chaperonin GroES, plays an essential role in assisting protein folding. The GroEL-GroES system forms a nano-cage that allows encapsulation of the non-native substrate proteins and provides a physical environment optimized to promote and accelerate protein folding. May play a protective role against the defense mechanisms generated by the infected macrophages. The protein is Chaperonin GroEL of Legionella micdadei (Tatlockia micdadei).